The following is a 524-amino-acid chain: Bifunctional purine biosynthesis protein PurH (524 aa).

Positions 1–154 (MTRLALLSTS…KNHAHVTVLC (154 aa)) constitute an MGS-like domain.

This sequence belongs to the PurH family.

It carries out the reaction (6R)-10-formyltetrahydrofolate + 5-amino-1-(5-phospho-beta-D-ribosyl)imidazole-4-carboxamide = 5-formamido-1-(5-phospho-D-ribosyl)imidazole-4-carboxamide + (6S)-5,6,7,8-tetrahydrofolate. The enzyme catalyses IMP + H2O = 5-formamido-1-(5-phospho-D-ribosyl)imidazole-4-carboxamide. Its pathway is purine metabolism; IMP biosynthesis via de novo pathway; 5-formamido-1-(5-phospho-D-ribosyl)imidazole-4-carboxamide from 5-amino-1-(5-phospho-D-ribosyl)imidazole-4-carboxamide (10-formyl THF route): step 1/1. It functions in the pathway purine metabolism; IMP biosynthesis via de novo pathway; IMP from 5-formamido-1-(5-phospho-D-ribosyl)imidazole-4-carboxamide: step 1/1. In Acaryochloris marina (strain MBIC 11017), this protein is Bifunctional purine biosynthesis protein PurH.